The following is a 157-amino-acid chain: Protein-export protein SecB (157 aa).

It belongs to the SecB family. In terms of assembly, homotetramer, a dimer of dimers. One homotetramer interacts with 1 SecA dimer.

Its subcellular location is the cytoplasm. Its function is as follows. One of the proteins required for the normal export of preproteins out of the cell cytoplasm. It is a molecular chaperone that binds to a subset of precursor proteins, maintaining them in a translocation-competent state. It also specifically binds to its receptor SecA. In Alcanivorax borkumensis (strain ATCC 700651 / DSM 11573 / NCIMB 13689 / SK2), this protein is Protein-export protein SecB.